A 308-amino-acid chain; its full sequence is Vomeronasal type-1 receptor 92 (308 aa).

Topologically, residues 1 to 18 are extracellular; it reads MNKDNTLHTIMKITMFSE. Residues 19–39 traverse the membrane as a helical segment; that stretch reads VSVGISANSILFFAHLCMLLG. Over 40 to 48 the chain is Cytoplasmic; sequence ENRPKPFHL. Residues 49-69 traverse the membrane as a helical segment; it reads YIVSLSLTQLILLITMGLIAV. At 70–91 the chain is on the extracellular side; it reads DMFMSWGRWDSTPCQSLIYLHR. Cys-83 and Cys-170 are oxidised to a cystine. The chain crosses the membrane as a helical span at residues 92-112; that stretch reads LLRGFTLCAACLLNVFWMITL. The Cytoplasmic segment spans residues 113–132; that stretch reads SPRSSCLSKFKHNSPHHISG. A helical membrane pass occupies residues 133–153; sequence AFLFLCVLYMSFSSHLLVSII. Residues 154–188 lie on the Extracellular side of the membrane; sequence ATPNLTSNIFMYVTQSCSLLPMSYSRTSTFSTTIA. Asn-157 carries an N-linked (GlcNAc...) asparagine glycan. A helical transmembrane segment spans residues 189 to 209; sequence IREAFLISLMALSSGFMVTLL. Topologically, residues 210–236 are cytoplasmic; that stretch reads WRHKKQAQHLHSTSLSSKASPERRATR. Residues 237-257 traverse the membrane as a helical segment; sequence TILLLMSFFVVLYILENVVFY. The Extracellular segment spans residues 258–267; the sequence is SRMKFKDGSM. The helical transmembrane segment at 268 to 288 threads the bilayer; sequence FYCVQIIVSHSYATISPFVFI. Residues 289-308 are Cytoplasmic-facing; sequence CTEKHMTKILRSVCTRIINI.

Belongs to the G-protein coupled receptor 1 family.

It is found in the cell membrane. Functionally, putative pheromone receptor implicated in the regulation of social as well as reproductive behavior. The polypeptide is Vomeronasal type-1 receptor 92 (Vom1r92) (Rattus norvegicus (Rat)).